Reading from the N-terminus, the 238-residue chain is Sugar fermentation stimulation protein homolog (238 aa).

It belongs to the SfsA family.

The polypeptide is Sugar fermentation stimulation protein homolog (Vibrio parahaemolyticus serotype O3:K6 (strain RIMD 2210633)).